Here is a 655-residue protein sequence, read N- to C-terminus: p-hydroxybenzoic acid efflux pump subunit AaeB (655 aa).

11 consecutive transmembrane segments (helical) span residues Phe13–Leu33, Trp38–Pro58, Leu69–Ile89, Leu93–Val113, Trp121–Leu141, Glu152–Ile172, Leu370–Val390, Phe407–Pro427, Gln431–Val451, Met459–Phe479, and Phe482–Leu502.

This sequence belongs to the aromatic acid exporter ArAE (TC 2.A.85) family.

The protein resides in the cell inner membrane. In terms of biological role, forms an efflux pump with AaeA. Could function as a metabolic relief valve, allowing to eliminate certain compounds when they accumulate to high levels in the cell. The polypeptide is p-hydroxybenzoic acid efflux pump subunit AaeB (Escherichia coli (strain SMS-3-5 / SECEC)).